Here is a 124-residue protein sequence, read N- to C-terminus: Small ribosomal subunit protein uS12 (124 aa).

D89 is modified (3-methylthioaspartic acid).

It belongs to the universal ribosomal protein uS12 family. In terms of assembly, part of the 30S ribosomal subunit. Contacts proteins S8 and S17. May interact with IF1 in the 30S initiation complex.

With S4 and S5 plays an important role in translational accuracy. Functionally, interacts with and stabilizes bases of the 16S rRNA that are involved in tRNA selection in the A site and with the mRNA backbone. Located at the interface of the 30S and 50S subunits, it traverses the body of the 30S subunit contacting proteins on the other side and probably holding the rRNA structure together. The combined cluster of proteins S8, S12 and S17 appears to hold together the shoulder and platform of the 30S subunit. This chain is Small ribosomal subunit protein uS12, found in Photobacterium profundum (strain SS9).